Reading from the N-terminus, the 395-residue chain is Flap endonuclease 1 (395 aa).

An N-domain region spans residues 1-104 (MGIKHLYQVI…GELAKRFMRK (104 aa)). Asp34 is a Mg(2+) binding site. DNA-binding residues include Arg47 and Arg70. Mg(2+) contacts are provided by Asp86, Glu158, Glu160, Asp179, and Asp181. The tract at residues 122 to 253 (DVEKFSRRTV…NTALKLIRDH (132 aa)) is I-domain. Position 158 (Glu158) interacts with DNA. 2 residues coordinate DNA: Gly231 and Asp233. Mg(2+) is bound at residue Asp233. Residues 341 to 349 (QQSRLEGFF) form an interaction with PCNA region. The segment covering 357-389 (QEKATLKRKHEEKLELQKKKKKEEAKAKKEAKS) has biased composition (basic and acidic residues). The segment at 357–395 (QEKATLKRKHEEKLELQKKKKKEEAKAKKEAKSKPRGAV) is disordered.

The protein belongs to the XPG/RAD2 endonuclease family. FEN1 subfamily. In terms of assembly, interacts with PCNA. Three molecules of FEN1 bind to one PCNA trimer with each molecule binding to one PCNA monomer. PCNA stimulates the nuclease activity without altering cleavage specificity. Mg(2+) serves as cofactor. Post-translationally, phosphorylated. Phosphorylation upon DNA damage induces relocalization to the nuclear plasma.

The protein localises to the nucleus. Its subcellular location is the nucleolus. It is found in the nucleoplasm. The protein resides in the mitochondrion. In terms of biological role, structure-specific nuclease with 5'-flap endonuclease and 5'-3' exonuclease activities involved in DNA replication and repair. During DNA replication, cleaves the 5'-overhanging flap structure that is generated by displacement synthesis when DNA polymerase encounters the 5'-end of a downstream Okazaki fragment. It enters the flap from the 5'-end and then tracks to cleave the flap base, leaving a nick for ligation. Also involved in the long patch base excision repair (LP-BER) pathway, by cleaving within the apurinic/apyrimidinic (AP) site-terminated flap. Acts as a genome stabilization factor that prevents flaps from equilibrating into structures that lead to duplications and deletions. Also possesses 5'-3' exonuclease activity on nicked or gapped double-stranded DNA, and exhibits RNase H activity. Also involved in replication and repair of rDNA and in repairing mitochondrial DNA. In Ajellomyces dermatitidis (strain ER-3 / ATCC MYA-2586) (Blastomyces dermatitidis), this protein is Flap endonuclease 1.